The primary structure comprises 377 residues: ATP synthase gamma chain, chloroplastic (377 aa).

The transit peptide at 1 to 55 (MSCSNLTMLVSSKPSLSDSSALSFRSSVSPFQLPNHNTSGPSNPSRSSSVTPVHC) directs the protein to the chloroplast. The interval 30 to 52 (PFQLPNHNTSGPSNPSRSSSVTP) is disordered. Residues 37 to 52 (NTSGPSNPSRSSSVTP) are compositionally biased toward low complexity. C143 is an active-site residue. A disulfide bond links C253 and C259.

This sequence belongs to the ATPase gamma chain family. F-type ATPases have 2 components, CF(1) - the catalytic core - and CF(0) - the membrane proton channel. CF(1) has five subunits: alpha(3), beta(3), gamma(1), delta(1), epsilon(1). CF(0) has four main subunits: a, b, b' and c.

The protein resides in the plastid. Its subcellular location is the chloroplast thylakoid membrane. Its function is as follows. Produces ATP from ADP in the presence of a proton gradient across the membrane. The gamma chain is believed to be important in regulating ATPase activity and the flow of protons through the CF(0) complex. In Nicotiana tabacum (Common tobacco), this protein is ATP synthase gamma chain, chloroplastic (ATPC).